Here is a 329-residue protein sequence, read N- to C-terminus: GMP reductase (329 aa).

The active-site Thioimidate intermediate is the C178. 207-230 is an NADP(+) binding site; the sequence is VIADGGIRTHGDVAKSIRMGATMV.

It belongs to the IMPDH/GMPR family. GuaC type 2 subfamily.

The catalysed reaction is IMP + NH4(+) + NADP(+) = GMP + NADPH + 2 H(+). In terms of biological role, catalyzes the irreversible NADPH-dependent deamination of GMP to IMP. It functions in the conversion of nucleobase, nucleoside and nucleotide derivatives of G to A nucleotides, and in maintaining the intracellular balance of A and G nucleotides. This Lactococcus lactis subsp. cremoris (strain MG1363) protein is GMP reductase.